The primary structure comprises 203 residues: MKKTFVKKAMLTTAAMTSAALLTFGPDAASAKTPVDNTAVQLQHQASTNEDLNTFIDILNQCIYEQDGVYYFDSEKAVELGMTKEEAQVIATLWESTSEFFSIVSQCVYLEDGNYKFDTEKAVELGFTEKEALALEQFFSAVSLKIHILQAAIVLQDDVYSYDKDAALQAGATPLQADVYEKLFSALSQEQLAAIYDMIHPQA.

The first 31 residues, 1–31, serve as a signal peptide directing secretion; sequence MKKTFVKKAMLTTAAMTSAALLTFGPDAASA.

This is an uncharacterized protein from Bacillus subtilis (strain 168).